The primary structure comprises 135 residues: Large ribosomal subunit protein uL16c (135 aa).

Belongs to the universal ribosomal protein uL16 family. In terms of assembly, part of the 50S ribosomal subunit.

Its subcellular location is the plastid. It localises to the chloroplast. The polypeptide is Large ribosomal subunit protein uL16c (Jasminum nudiflorum (Winter jasmine)).